Reading from the N-terminus, the 344-residue chain is MNKKSLNIVATLGILLVLAFSGCVDQSASDSTSEEKVLKIFHAGSLAVPFLEYETLYEDEYPNVDVQRESAGSVACVRKITELNKTAEILASADYTLIPDMMMPDYADWYVMVSKNEIVIAYTENSQYYDEITSDNWYEIFQRDGVKYGFSSPNDDPCGYRTQMVVQLAETAYGDSTIYDNLMLKNSNFMVDENADGTYLVRSPSTIDVNEDKVFMRSKEVDLLGPLETGAFDYLFIYKSVANQHNLSFIELPDEINLGNYANADDYATTSIILEGQNSTILAKPIVYGMTVPSNADDYEEGVSFTKMVLEHPEVFENSGQPAISPAIAIGNVPEELSDLVVMG.

An N-terminal signal peptide occupies residues 1–28 (MNKKSLNIVATLGILLVLAFSGCVDQSA).

This sequence belongs to the bacterial solute-binding protein 1 family. WtpA subfamily.

This is an uncharacterized protein from Methanococcus maripaludis (strain C7 / ATCC BAA-1331).